The chain runs to 169 residues: NAD(P)H-quinone oxidoreductase subunit J, chloroplastic (169 aa).

The protein belongs to the complex I 30 kDa subunit family. NDH is composed of at least 16 different subunits, 5 of which are encoded in the nucleus.

It localises to the plastid. The protein localises to the chloroplast thylakoid membrane. It carries out the reaction a plastoquinone + NADH + (n+1) H(+)(in) = a plastoquinol + NAD(+) + n H(+)(out). It catalyses the reaction a plastoquinone + NADPH + (n+1) H(+)(in) = a plastoquinol + NADP(+) + n H(+)(out). In terms of biological role, NDH shuttles electrons from NAD(P)H:plastoquinone, via FMN and iron-sulfur (Fe-S) centers, to quinones in the photosynthetic chain and possibly in a chloroplast respiratory chain. The immediate electron acceptor for the enzyme in this species is believed to be plastoquinone. Couples the redox reaction to proton translocation, and thus conserves the redox energy in a proton gradient. The protein is NAD(P)H-quinone oxidoreductase subunit J, chloroplastic of Anthoceros angustus (Hornwort).